The following is a 243-amino-acid chain: NADH-ubiquinone oxidoreductase chain 6 (243 aa).

A run of 5 helical transmembrane segments spans residues Ile16–Val36, Ile41–Leu61, Ala69–Ile89, Ile104–Tyr124, and Ile201–Ile221.

The protein belongs to the complex I subunit 6 family.

The protein resides in the mitochondrion membrane. It carries out the reaction a ubiquinone + NADH + 5 H(+)(in) = a ubiquinol + NAD(+) + 4 H(+)(out). Functionally, core subunit of the mitochondrial membrane respiratory chain NADH dehydrogenase (Complex I) that is believed to belong to the minimal assembly required for catalysis. Complex I functions in the transfer of electrons from NADH to the respiratory chain. The immediate electron acceptor for the enzyme is believed to be ubiquinone. The polypeptide is NADH-ubiquinone oxidoreductase chain 6 (ndh-6) (Neurospora crassa (strain ATCC 24698 / 74-OR23-1A / CBS 708.71 / DSM 1257 / FGSC 987)).